Reading from the N-terminus, the 71-residue chain is MLCLPVFITLLLLVSPSAALPVESELQRDLTQDSPKDFRIREPLLLSKMFDRSCCGSSNTGSCCGRYQRGS.

The first 19 residues, 1-19 (MLCLPVFITLLLLVSPSAA), serve as a signal peptide directing secretion. Positions 20 to 52 (LPVESELQRDLTQDSPKDFRIREPLLLSKMFDR) are excised as a propeptide. 2 disulfides stabilise this stretch: Cys-54/Cys-63 and Cys-55/Cys-64. Cys-64 is subject to Cysteine amide. The propeptide occupies 66–71 (RYQRGS).

This sequence belongs to the conotoxin T superfamily. In terms of tissue distribution, expressed by the venom duct.

The protein localises to the secreted. The protein is Conotoxin ba5b of Conus bayani (Bayan's cone).